We begin with the raw amino-acid sequence, 335 residues long: Ficolin-1 (335 aa).

A signal peptide spans 1–17 (MWWPMLWAFPVLLCLCS). The tract at residues 47 to 114 (SCPSFPGPPG…TASPLGQKEL (68 aa)) is disordered. In terms of domain architecture, Collagen-like spans 50 to 88 (SFPGPPGPKGEPGSPAGRGERGLQGSPGKMGPPGSKGEP). Over residues 75–88 (SPGKMGPPGSKGEP) the composition is skewed to low complexity. The Fibrinogen C-terminal domain maps to 117–335 (ALCRRGPRSC…KVAEMKIRAS (219 aa)). 2 cysteine pairs are disulfide-bonded: cysteine 119-cysteine 147 and cysteine 126-cysteine 154. The interval 123 to 162 (PRSCKDLLTRGIFLTGWYTIYLPDCRPLTVLCDMDVDGGG) is a domain; contributes to trimerization. Residues 163 to 251 (WTVFQRRVDG…LTLGQFLEGT (89 aa)) form a b domain; contributes to trimerization region. A Ca(2+)-binding site is contributed by aspartate 270. Residue asparagine 271 is glycosylated (N-linked (GlcNAc...) asparagine). Residue aspartate 272 participates in Ca(2+) binding. Cysteine 279 and cysteine 292 are disulfide-bonded. 291–293 (DCH) contacts a carbohydrate. Residues 326–335 (KVAEMKIRAS) form a p domain region.

It belongs to the ficolin lectin family. Homotrimer. Interacts with elastin/ELN. Interacts (via Fibrinogen C-terminal domain) with FFAR2. Interacts with CRP; may regulate monocyte activation by FCN1.

It is found in the secreted. The protein localises to the cell membrane. In terms of biological role, extracellular lectin functioning as a pattern-recognition receptor in innate immunity. Binds the sugar moieties of pathogen-associated molecular patterns (PAMPs) displayed on microbes and activates the lectin pathway of the complement system. May also activate monocytes through a G protein-coupled receptor, FFAR2, inducing the secretion of interleukin-8/IL-8. Binds preferentially to 9-O-acetylated 2-6-linked sialic acid derivatives and to various glycans containing sialic acid engaged in a 2-3 linkage. This Rattus norvegicus (Rat) protein is Ficolin-1 (Fcn1).